We begin with the raw amino-acid sequence, 325 residues long: Solute-binding protein RD1_1052 (325 aa).

Residues 1-26 (MRLFTKIKGLAAVTCVAALASSAAFA) form the signal peptide. D-mannonate contacts are provided by residues Glu75, 93-95 (GES), 148-151 (RGPR), Arg171, and Asn211. L-galactonate is bound by residues Glu75, 93–95 (GES), 148–151 (RGPR), Arg171, and Asn211.

Belongs to the bacterial solute-binding protein 7 family. The complex is comprised of an extracytoplasmic solute-binding protein and a heteromeric permease formed by two transmembrane proteins.

It localises to the periplasm. Functionally, solute-binding protein that binds L-galactonate and D-mannonate (in vitro). Probably part of a tripartite ATP-independent periplasmic (TRAP) transport system that mediates solute transport into the cytoplasm. This is Solute-binding protein RD1_1052 from Roseobacter denitrificans (strain ATCC 33942 / OCh 114) (Erythrobacter sp. (strain OCh 114)).